The sequence spans 140 residues: Transcription antitermination protein NusB (140 aa).

Belongs to the NusB family.

Its function is as follows. Involved in transcription antitermination. Required for transcription of ribosomal RNA (rRNA) genes. Binds specifically to the boxA antiterminator sequence of the ribosomal RNA (rrn) operons. This is Transcription antitermination protein NusB from Streptococcus pneumoniae (strain 70585).